A 202-amino-acid polypeptide reads, in one-letter code: Ion-translocating oxidoreductase complex subunit G (202 aa).

A helical membrane pass occupies residues 11-31 (ACLMGFFSFFSLSSVIFVKNI). Position 176 is an FMN phosphoryl threonine (T176).

Belongs to the RnfG family. In terms of assembly, the complex is composed of six subunits: RnfA, RnfB, RnfC, RnfD, RnfE and RnfG. FMN serves as cofactor.

The protein localises to the cell inner membrane. Its function is as follows. Part of a membrane-bound complex that couples electron transfer with translocation of ions across the membrane. The protein is Ion-translocating oxidoreductase complex subunit G of Buchnera aphidicola subsp. Schizaphis graminum (strain Sg).